The sequence spans 246 residues: DNA polymerase sliding clamp (246 aa).

This sequence belongs to the PCNA family. As to quaternary structure, homotrimer. The subunits circularize to form a toroid; DNA passes through its center. Replication factor C (RFC) is required to load the toroid on the DNA.

Its function is as follows. Sliding clamp subunit that acts as a moving platform for DNA processing. Responsible for tethering the catalytic subunit of DNA polymerase and other proteins to DNA during high-speed replication. This Thermoplasma acidophilum (strain ATCC 25905 / DSM 1728 / JCM 9062 / NBRC 15155 / AMRC-C165) protein is DNA polymerase sliding clamp.